A 130-amino-acid polypeptide reads, in one-letter code: Small ribosomal subunit protein uS8 (130 aa).

Belongs to the universal ribosomal protein uS8 family. As to quaternary structure, part of the 30S ribosomal subunit. Contacts proteins S5 and S12.

In terms of biological role, one of the primary rRNA binding proteins, it binds directly to 16S rRNA central domain where it helps coordinate assembly of the platform of the 30S subunit. The chain is Small ribosomal subunit protein uS8 from Aliivibrio fischeri (strain MJ11) (Vibrio fischeri).